The sequence spans 949 residues: General transcription factor II-I repeat domain-containing protein 2B (949 aa).

2 GTF2I-like repeats span residues 98–192 (QVHS…QLGG) and 323–417 (LSSI…SNVG).

Belongs to the TFII-I family. Ubiquitous.

The protein resides in the nucleus. The sequence is that of General transcription factor II-I repeat domain-containing protein 2B (GTF2IRD2B) from Homo sapiens (Human).